The following is a 161-amino-acid chain: Allophycocyanin subunit alpha 1 (161 aa).

Asn71 carries the post-translational modification N4-methylasparagine. Cys81 provides a ligand contact to (2R,3E)-phycocyanobilin.

It belongs to the phycobiliprotein family. In terms of assembly, heterohexamer of two alpha chains, one alpha-B chain and three beta chains. Contains one covalently linked phycocyanobilin chromophore. The chromophore is added by phycocyanobilin lyase CpcS 1.

Its subcellular location is the cellular thylakoid membrane. In terms of biological role, light-harvesting photosynthetic bile pigment-protein from the phycobiliprotein complex. Allophycocyanin has a maximum absorption at approximately 650 to 653 nanometers. This is Allophycocyanin subunit alpha 1 (apcA1) from Nostoc sp. (strain PCC 7120 / SAG 25.82 / UTEX 2576).